A 496-amino-acid polypeptide reads, in one-letter code: Ribose import ATP-binding protein RbsA (496 aa).

ABC transporter domains lie at 5 to 242 (IEMK…VGRS) and 252 to 496 (SQIG…TGGE). 37–44 (GENGAGKS) contributes to the ATP binding site.

The protein belongs to the ABC transporter superfamily. Ribose importer (TC 3.A.1.2.1) family. As to quaternary structure, the complex is composed of an ATP-binding protein (RbsA), two transmembrane proteins (RbsC) and a solute-binding protein (RbsB).

It is found in the cell membrane. It carries out the reaction D-ribose(out) + ATP + H2O = D-ribose(in) + ADP + phosphate + H(+). In terms of biological role, part of the ABC transporter complex RbsABC involved in ribose import. Responsible for energy coupling to the transport system. In Bacillus cereus (strain ATCC 14579 / DSM 31 / CCUG 7414 / JCM 2152 / NBRC 15305 / NCIMB 9373 / NCTC 2599 / NRRL B-3711), this protein is Ribose import ATP-binding protein RbsA.